The chain runs to 375 residues: Protein abhd-3.2 (375 aa).

In terms of domain architecture, AB hydrolase-1 spans 108 to 203; the sequence is PIVVFLPGIT…ILWNYLAMTG (96 aa). Active-site charge relay system residues include Ser189, Asp315, and His344.

Belongs to the AB hydrolase superfamily. AB hydrolase 4 family.

This chain is Protein abhd-3.2, found in Caenorhabditis elegans.